Consider the following 97-residue polypeptide: Prophage lipoprotein Bor homolog (97 aa).

The N-terminal stretch at 1–16 is a signal peptide; it reads MKKMLLATALALLITG. Cys-17 carries the N-palmitoyl cysteine lipid modification. Residue Cys-17 is the site of S-diacylglycerol cysteine attachment.

The protein belongs to the lambda phage bor family.

The protein localises to the cell membrane. This Escherichia coli (strain K12) protein is Prophage lipoprotein Bor homolog (borD).